Reading from the N-terminus, the 41-residue chain is uncharacterized protein (41 aa).

It localises to the plastid. It is found in the chloroplast. This is an uncharacterized protein from Trieres chinensis (Marine centric diatom).